A 299-amino-acid polypeptide reads, in one-letter code: Taste receptor type 2 member 1 (299 aa).

The Extracellular portion of the chain corresponds to methionine 1–tyrosine 9. A helical transmembrane segment spans residues phenylalanine 10 to valine 30. The Cytoplasmic portion of the chain corresponds to asparagine 31–arginine 55. The helical transmembrane segment at isoleucine 56 to isoleucine 76 threads the bilayer. At methionine 77–asparagine 81 the chain is on the extracellular side. The chain crosses the membrane as a helical span at residues cysteine 82–phenylalanine 102. Topologically, residues tyrosine 103 to lysine 124 are cytoplasmic. The helical transmembrane segment at leucine 125–serine 145 threads the bilayer. At lysine 146 to serine 178 the chain is on the extracellular side. Asparagine 163 carries an N-linked (GlcNAc...) asparagine glycan. A helical membrane pass occupies residues phenylalanine 179–phenylalanine 199. Over serine 200–alanine 222 the chain is Cytoplasmic. A helical membrane pass occupies residues proline 223 to isoleucine 243. Residues lysine 244–phenylalanine 257 are Extracellular-facing. A helical membrane pass occupies residues isoleucine 258–isoleucine 278. Over leucine 279 to glutamine 299 the chain is Cytoplasmic.

This sequence belongs to the G-protein coupled receptor T2R family.

The protein localises to the membrane. Its function is as follows. Receptor that may play a role in the perception of bitterness and is gustducin-linked. May play a role in sensing the chemical composition of the gastrointestinal content. The activity of this receptor may stimulate alpha gustducin, mediate PLC-beta-2 activation and lead to the gating of TRPM5. This Pan paniscus (Pygmy chimpanzee) protein is Taste receptor type 2 member 1 (TAS2R1).